Here is a 254-residue protein sequence, read N- to C-terminus: Guanylate kinase (254 aa).

The Guanylate kinase-like domain occupies 64–243 (KHLVVLAGPT…AAREVVDLMM (180 aa)). 71–78 (GPTAVGKG) lines the ATP pocket.

This sequence belongs to the guanylate kinase family.

The protein localises to the cytoplasm. The enzyme catalyses GMP + ATP = GDP + ADP. Its function is as follows. Essential for recycling GMP and indirectly, cGMP. The polypeptide is Guanylate kinase (Leifsonia xyli subsp. xyli (strain CTCB07)).